The following is a 97-amino-acid chain: UPF0235 protein DET1292 (97 aa).

Belongs to the UPF0235 family.

This is UPF0235 protein DET1292 from Dehalococcoides mccartyi (strain ATCC BAA-2266 / KCTC 15142 / 195) (Dehalococcoides ethenogenes (strain 195)).